A 1413-amino-acid polypeptide reads, in one-letter code: DNA-directed RNA polymerase subunit beta' (1413 aa).

Positions 70, 72, 85, and 88 each coordinate Zn(2+). Residues aspartate 460, aspartate 462, and aspartate 464 each coordinate Mg(2+). Positions 819, 893, 900, and 903 each coordinate Zn(2+).

It belongs to the RNA polymerase beta' chain family. In terms of assembly, the RNAP catalytic core consists of 2 alpha, 1 beta, 1 beta' and 1 omega subunit. When a sigma factor is associated with the core the holoenzyme is formed, which can initiate transcription. Mg(2+) serves as cofactor. Zn(2+) is required as a cofactor.

It catalyses the reaction RNA(n) + a ribonucleoside 5'-triphosphate = RNA(n+1) + diphosphate. Its function is as follows. DNA-dependent RNA polymerase catalyzes the transcription of DNA into RNA using the four ribonucleoside triphosphates as substrates. This chain is DNA-directed RNA polymerase subunit beta', found in Burkholderia vietnamiensis (strain G4 / LMG 22486) (Burkholderia cepacia (strain R1808)).